Consider the following 790-residue polypeptide: Probable copper-transporting ATPase SynA (790 aa).

Residues 1 to 105 (MPAAIVHSAD…IPPLQQQRLQ (105 aa)) are Cytoplasmic-facing. One can recognise an HMA domain in the interval 14-81 (TSILVEVEGM…EITGLGFRAQ (68 aa)). Cu(+)-binding residues include Cys-25 and Cys-28. Residues 106-127 (LAIAAFLLIVSSWGHLGHWLDH) form a helical membrane-spanning segment. The Extracellular segment spans residues 128 to 136 (PLPGTDQLW). A helical membrane pass occupies residues 137–156 (FHALLATWALLGPGRSILQA). Topologically, residues 157-163 (GWQGLRC) are cytoplasmic. A helical transmembrane segment spans residues 164-184 (GAPNMNSLVLLGTGSAYLASL). Residues 185-198 (VALLWPQLGWVCFF) lie on the Extracellular side of the membrane. A helical membrane pass occupies residues 199–219 (DEPVMLLGFILLGRTLEEQAR). Residues 220 to 358 (FRSQAALQNL…KAPVQRFADA (139 aa)) are Cytoplasmic-facing. A helical transmembrane segment spans residues 359 to 381 (IAGRFVYGVCAIAALTFGFWATL). At 382 to 420 (GSRWWPQVLQQPLPGLLIHAPHHGMEMAHPHSHSPLLLA) the chain is on the extracellular side. A helical transmembrane segment spans residues 421–438 (LTLAISVLVVACPCALGL). The Cytoplasmic portion of the chain corresponds to 439 to 723 (ATPTAILVAT…NLSQMGLRTI (285 aa)). Catalysis depends on Asp-476, which acts as the 4-aspartylphosphate intermediate. Positions 669 and 673 each coordinate Mg(2+). Residues 724–743 (RQNLTWALGYNVVMLPLAAG) form a helical membrane-spanning segment. The Extracellular portion of the chain corresponds to 744–755 (AFLPAYGLALTP). Residues 756 to 774 (AIAGACMAVSSLAVVSNSL) traverse the membrane as a helical segment. Residues 775–790 (LLRYWFRRSLNHSVSV) lie on the Cytoplasmic side of the membrane.

The protein belongs to the cation transport ATPase (P-type) (TC 3.A.3) family. Type IB subfamily.

It is found in the cell membrane. The enzyme catalyses Cu(+)(in) + ATP + H2O = Cu(+)(out) + ADP + phosphate + H(+). In terms of biological role, involved in copper transport. In Synechococcus elongatus (strain ATCC 33912 / PCC 7942 / FACHB-805) (Anacystis nidulans R2), this protein is Probable copper-transporting ATPase SynA (synA).